The sequence spans 290 residues: 4-hydroxy-tetrahydrodipicolinate synthase (290 aa).

Residue Thr-44 participates in pyruvate binding. Tyr-132 functions as the Proton donor/acceptor in the catalytic mechanism. The Schiff-base intermediate with substrate role is filled by Lys-160. Ile-202 provides a ligand contact to pyruvate.

It belongs to the DapA family. Homotetramer; dimer of dimers.

The protein localises to the cytoplasm. It carries out the reaction L-aspartate 4-semialdehyde + pyruvate = (2S,4S)-4-hydroxy-2,3,4,5-tetrahydrodipicolinate + H2O + H(+). It participates in amino-acid biosynthesis; L-lysine biosynthesis via DAP pathway; (S)-tetrahydrodipicolinate from L-aspartate: step 3/4. Its function is as follows. Catalyzes the condensation of (S)-aspartate-beta-semialdehyde [(S)-ASA] and pyruvate to 4-hydroxy-tetrahydrodipicolinate (HTPA). This Geotalea daltonii (strain DSM 22248 / JCM 15807 / FRC-32) (Geobacter daltonii) protein is 4-hydroxy-tetrahydrodipicolinate synthase.